A 154-amino-acid chain; its full sequence is MSNIEIKILDSRMKNNFSLPSYATLGSSGLDLRACLDETVKLKAHKTILIPTGIAIYIANPNITALILPRSGLGHKKGIVLGNLVGLIDSDYQGQLMISLWNRSDQDFYVNPHDRVAQIIFVPIIRPCFLLVKNFNETSRSKKGFGHSGVSGVI.

Substrate is bound by residues 70 to 72, Asn-83, 87 to 89, and Met-97; these read RSG and LID.

It belongs to the dUTPase family. It depends on Mg(2+) as a cofactor.

The catalysed reaction is dUTP + H2O = dUMP + diphosphate + H(+). It participates in pyrimidine metabolism; dUMP biosynthesis; dUMP from dCTP (dUTP route): step 2/2. Functionally, this enzyme is involved in nucleotide metabolism: it produces dUMP, the immediate precursor of thymidine nucleotides and it decreases the intracellular concentration of dUTP so that uracil cannot be incorporated into DNA. The chain is Deoxyuridine 5'-triphosphate nucleotidohydrolase from Buchnera aphidicola subsp. Acyrthosiphon pisum (strain 5A).